The chain runs to 647 residues: Pumilio homolog 3 (647 aa).

Over residues 1–10 the composition is skewed to basic residues; it reads MEVKGKKKIT. Positions 1–123 are disordered; sequence MEVKGKKKIT…KKKKELKQNR (123 aa). N6-acetyllysine is present on lysine 33. A compositionally biased stretch (basic residues) spans 59–68; that stretch reads PGKKRVKQFK. Basic and acidic residues predominate over residues 93-123; that stretch reads FQPDGKSDESAAKKPKWDDFKKKKKELKQNR. Positions 105 to 117 match the Nuclear localization signal motif; it reads KKPKWDDFKKKKK. Positions 142-509 constitute a PUM-HD domain; sequence ESLRRKDCDK…VVLDKSVCVL (368 aa). 11 Pumilio repeats span residues 176–211, 212–247, 248–276, 288–324, 325–360, 361–396, 397–434, 435–503, 504–550, 551–595, and 596–635; these read HDSTRVIQCLIQYGSEEQRKWAFEELQGDLVELSKA, KYSRNIVKKFLMYGSKPQIAEIIRSFKGHVRKMLRH, SEASAIVEYAYNDKAILEQRNMLTEELYG, PTLEKVLEVQPGKLELILDEMKQILTPMAQKEAVIKH, SLVHKVFLDFFTYAPPKLRSELIEAIREAVVYLAHT, HDGARVAMHCLWHGTPKDRKVIVKTMKTYVEKIANG, QYSHLVLLAAFDCIDDTKLVKQIIISEVISSLPSIVND, KYGR…VVLD, KSVC…IAEH, PAGH…WASI, and NRGAIVLSSLLQSCDQDVVNKVKAGLKTLIPTLEKTKSTS.

As to quaternary structure, interacts with PARP1 (via catalytic domain).

The protein resides in the nucleus. It localises to the nucleolus. The protein localises to the nucleoplasm. It is found in the chromosome. Its function is as follows. Inhibits the poly(ADP-ribosyl)ation activity of PARP1 and the degradation of PARP1 by CASP3 following genotoxic stress. Binds to double-stranded RNA or DNA without sequence specificity. Involved in development of the eye and of primordial germ cells. This is Pumilio homolog 3 from Rattus norvegicus (Rat).